We begin with the raw amino-acid sequence, 529 residues long: CRISPR-associated endodeoxyribonuclease Cas12f1 (529 aa).

A zinc finger domain (ZF) region spans residues 1 to 95; the sequence is MAKNTITKTL…RGQFPDAVFW (95 aa). Zn(2+) contacts are provided by C50, H53, C69, and C72. Residues 96-192 form a recognition domain (REC) region; it reads QEISEIFRQL…PTTKSDNFPI (97 aa). The tract at residues 193–312 is wedge domain (WED); that stretch reads PLVKQKGGQY…MLNLSIDVPK (120 aa). A linker region spans residues 313 to 321; the sequence is IDKGVDPSI. A ruvC-I region spans residues 322 to 473; it reads IGGIDVGVKS…RKVAPNNTSK (152 aa). Active-site residues include D326 and E422. The interval 474-508 is target nucleic acid-binding (TNB); sequence TCSKCGHLNNYFNFEYRKKNKFPHFKCEKCNFKEN. Zn(2+) contacts are provided by C475 and C478. The active site involves R490. Positions 500 and 503 each coordinate Zn(2+). Residues 509 to 529 form a ruvC-II region; that stretch reads ADYNAALNISNPKLKSTKEEP. D510 is a catalytic residue.

It belongs to the CRISPR-associated endonuclease Cas12f family. As to quaternary structure, an asymmetric homodimer. Guide RNA is probably required for dimerization. Requires Mg(2+) as cofactor. It depends on Zn(2+) as a cofactor.

Target ssDNA cleavage is inhibited by EDTA. Activity is maximal with 5-50 mM NaCl, is less efficient at higher NaCl concentrations. CRISPR (clustered regularly interspaced short palindromic repeat), is an adaptive immune system that provides protection against mobile genetic elements (viruses, transposable elements and conjugative plasmids). CRISPR clusters contain sequences complementary to antecedent mobile elements and target invading nucleic acids. CRISPR clusters are transcribed and processed into CRISPR RNA (crRNA), which requires a trans-encoded small RNA (tracrRNA), but not this protein (in vitro). Upon expression in E.coli of this protein, a mini CRISPR array and the probable tracrRNA, the protein associates with both RNAs. The mini system is not active in E.coli against phiX174 phage, nor is it active in protection against transformation by foreign plasmids. In vitro the purified protein-tracrRNA-crRNA complex cleaves ssDNA complementary to the crRNA; target cleavage requires both tracrRNA and crRNA, but not a protospacer adjacent motif (PAM). The tracrRNA-crRNA can be replaced by a single guide RNA (sgRNA). 2-nucleotide mismatches in the middle of the crRNA:DNA heteroduplex decrease cleavage. Cleavage occurs just downstream of the heteroduplex. Activation of this protein results in non-specific ssDNA degradation in vitro. In vitro and in E.coli (coexpressed with sgRNA) has dsDNA endonuclease activity, recognizing the 5' PAM sequence TTTR; both sgRNA and a PAM are required for activity. Cleaves the target strand 24 and the nontarget strand 22 bases upstream of the PAM (respectively), resulting in 5' overhangs. The 2 monomers interact differently with the sgRNA and target DNA. Mutagenesis of a dimeric construct shows that one of the RuvC monomers probably cleaves both DNA strands. The chain is CRISPR-associated endodeoxyribonuclease Cas12f1 from Uncultured archaeon.